The following is a 364-amino-acid chain: MAGTVTVPGSSTPSTPLLKDELDIVIPTIRNLDFLEMWRAFFQPYHLIIVQDGDPTKTIKVPEGFDYELYNRNDINRILGPKASCISFKDSACRCFGYMVSKKKYIYTIDDDCFVAKDPSGKDINALEQHIKNLLSPSTPFFFNTLYDPYREGADFVRGYPFSLREGAHTAVSHGLWLNIPDYDAPTQLVKPKERNERYVDAVMTIPKGTLFPMCGMNLAFDRDLIGPAMYFGLMGDGQPIGRYDDMWAGWCVKVICDHLSLGVKTGLPYIWHSKASNPFVNLKKEYKGIFWQEDIIPFFQNVTIPKDCDTVQKCYIYLSGQVKEKLGTIDPYFVKLGDAMVTWIEAWDELNPSTPAAANGKAK.

The short motif at 110-112 is the DXD motif element; sequence DDD. R158 carries an N-linked (Glc...) arginine glycan.

This sequence belongs to the RGP family. In terms of assembly, homopentamer or homohexamer. It depends on Mn(2+) as a cofactor. The cofactor is Mg(2+). In terms of processing, reversibly glycosylated by UDP-glucose, UDP-xylose and UDP-galactose.

Its subcellular location is the secreted. The protein resides in the cell wall. It localises to the cell junction. It is found in the plasmodesma. The protein localises to the golgi apparatus. The catalysed reaction is UDP-beta-L-arabinofuranose = UDP-beta-L-arabinopyranose. Functionally, probable UDP-L-arabinose mutase involved in the biosynthesis of cell wall non-cellulosic polysaccharides. Was initially shown to possess an autoglycosylating activity which is dependent on the presence of UDP-glucose and manganese. This is Probable UDP-arabinopyranose mutase 1 from Zea mays (Maize).